The chain runs to 1120 residues: Transcriptional repressor NF-X1 (1120 aa).

The interval 9–26 (GTFKFNTDAAEFIPQEKK) is interaction with PABPC1 and PABC4. Positions 22-295 (PQEKKNSGLN…LNERPAKSTC (274 aa)) are disordered. Phosphoserine is present on residues S50, S82, and S95. Residues 73–106 (YHPSGSKPKSQQTSFQSSPCNKSPKSHGLQNQPW) show a composition bias toward polar residues. The segment covering 111-120 (NEKHHIRVKK) has biased composition (basic residues). The segment covering 124-141 (LAEQTSDTAGLESSTRSE) has biased composition (polar residues). Residues S129 and S150 each carry the phosphoserine modification. Basic and acidic residues-rich tracts occupy residues 142–159 (SGTD…KEVV), 188–202 (LKCE…KPED), 222–254 (SSRK…EGAR), and 282–291 (PKDDLNERPA). S326 carries the post-translational modification Phosphoserine. The segment at 358-409 (CMVCCELVRVTAPVWSCQSCYHVFHLNCIKKWARSPASQADGQSGWRCPACQ) adopts an RING-type; atypical zinc-finger fold. 8 NF-X1-type zinc fingers span residues 453–471 (CPHS…PCPA), 506–525 (CGQH…PCQI), 567–586 (CGNH…QCPR), 632–655 (CGSL…PCSR), 694–713 (CGRH…KCPL), 721–740 (CGLH…TCWQ), 832–854 (CGMH…PCKQ), and 863–884 (CGHP…ACKA). The R3H domain maps to 994–1062 (LKFVSDVEKE…KRNVVVTAIR (69 aa)). Residues 1081–1109 (QARPPPPIPHHRHQSDKNPGSSNLQKITK) form a disordered region. A compositionally biased stretch (polar residues) spans 1097 to 1106 (KNPGSSNLQK).

The protein belongs to the NFX1 family. Isoform 1 interacts with PABPC1 and PABPC4. In terms of assembly, (Microbial infection) Isoform 1 and isoform 3 interact with human papillomavirus (HPV) type-16 E6 oncoprotein. Post-translationally, isoform 3 is polyubiquitinated in the presence of HPV16 E6 protein; which leads to proteasomal degradation. Isoform 1 is not polyubiquitinated.

The protein resides in the nucleus. In terms of biological role, binds to the X-box motif of MHC class II genes and represses their expression. May play an important role in regulating the duration of an inflammatory response by limiting the period in which MHC class II molecules are induced by interferon-gamma. Isoform 3 binds to the X-box motif of TERT promoter and represses its expression. Together with PABPC1 or PABPC4, isoform 1 acts as a coactivator for TERT expression. Mediates E2-dependent ubiquitination. The chain is Transcriptional repressor NF-X1 (NFX1) from Homo sapiens (Human).